The primary structure comprises 171 residues: Co-chaperone protein HscB (171 aa).

Residues 2–74 (DYFTLFGLPA…LMRAEYLLSL (73 aa)) form the J domain.

It belongs to the HscB family. Interacts with HscA and stimulates its ATPase activity. Interacts with IscU.

Its function is as follows. Co-chaperone involved in the maturation of iron-sulfur cluster-containing proteins. Seems to help targeting proteins to be folded toward HscA. The protein is Co-chaperone protein HscB of Escherichia coli (strain SMS-3-5 / SECEC).